Here is a 515-residue protein sequence, read N- to C-terminus: Maturase K (515 aa).

It belongs to the intron maturase 2 family. MatK subfamily.

Its subcellular location is the plastid. It localises to the chloroplast. In terms of biological role, usually encoded in the trnK tRNA gene intron. Probably assists in splicing its own and other chloroplast group II introns. This chain is Maturase K, found in Pinus cembra (Swiss stone pine).